Here is a 479-residue protein sequence, read N- to C-terminus: ATP synthase subunit beta (479 aa).

153–160 (GGAGVGKT) lines the ATP pocket.

The protein belongs to the ATPase alpha/beta chains family. F-type ATPases have 2 components, CF(1) - the catalytic core - and CF(0) - the membrane proton channel. CF(1) has five subunits: alpha(3), beta(3), gamma(1), delta(1), epsilon(1). CF(0) has three main subunits: a(1), b(2) and c(9-12). The alpha and beta chains form an alternating ring which encloses part of the gamma chain. CF(1) is attached to CF(0) by a central stalk formed by the gamma and epsilon chains, while a peripheral stalk is formed by the delta and b chains.

The protein resides in the cell membrane. The catalysed reaction is ATP + H2O + 4 H(+)(in) = ADP + phosphate + 5 H(+)(out). Its function is as follows. Produces ATP from ADP in the presence of a proton gradient across the membrane. The catalytic sites are hosted primarily by the beta subunits. The chain is ATP synthase subunit beta from Lactobacillus helveticus (strain DPC 4571).